Here is a 128-residue protein sequence, read N- to C-terminus: Fatty acid binding protein 1-B.1 (128 aa).

The protein belongs to the calycin superfamily. Fatty-acid binding protein (FABP) family. In terms of tissue distribution, expressed in the yolk syncytial layer (YSL) and subsequently in the intestinal bulb in developing embryos and larvae. In adults, expressed in the intestine.

The protein resides in the cytoplasm. Functionally, binds free fatty acids and their coenzyme A derivatives, bilirubin, and some other small molecules in the cytoplasm. May be involved in intracellular lipid transport. In Danio rerio (Zebrafish), this protein is Fatty acid binding protein 1-B.1 (fabp1b.1).